Here is a 176-residue protein sequence, read N- to C-terminus: Large ribosomal subunit protein eL20 (176 aa).

A Glycyl lysine isopeptide (Lys-Gly) (interchain with G-Cter in SUMO2) cross-link involves residue lysine 11. A Phosphotyrosine modification is found at tyrosine 63. Serine 71 is subject to Phosphoserine. Position 76 is an N6-succinyllysine (lysine 76). Serine 123 carries the phosphoserine modification. Glycyl lysine isopeptide (Lys-Gly) (interchain with G-Cter in SUMO2) cross-links involve residues lysine 128 and lysine 170.

It belongs to the eukaryotic ribosomal protein eL20 family. As to quaternary structure, component of the large ribosomal subunit. Binds IPO9 with high affinity.

It localises to the cytoplasm. Its function is as follows. Component of the large ribosomal subunit. The ribosome is a large ribonucleoprotein complex responsible for the synthesis of proteins in the cell. The sequence is that of Large ribosomal subunit protein eL20 (Rpl18a) from Mus musculus (Mouse).